Reading from the N-terminus, the 38-residue chain is Photosystem II reaction center protein Y (38 aa).

At 1–4 the chain is on the lumenal side; that stretch reads MSMR. Residues 5 to 23 form a helical membrane-spanning segment; sequence LVVVLLPLGIALGWAVYNI. Over 24–38 the chain is Stromal; that stretch reads GKLAIEQWRRTGSKV.

Belongs to the PsbY family. As to quaternary structure, PSII is composed of 1 copy each of membrane proteins PsbA, PsbB, PsbC, PsbD, PsbE, PsbF, PsbH, PsbI, PsbJ, PsbK, PsbL, PsbM, PsbT, PsbX, PsbY, PsbZ, Psb30/Ycf12, at least 3 peripheral proteins of the oxygen-evolving complex and a large number of cofactors. It forms dimeric complexes.

The protein resides in the plastid. It localises to the cyanelle thylakoid membrane. In terms of biological role, loosely associated component of the core of photosystem II (PSII), it is not always seen in crystals. PSII is a light-driven water plastoquinone oxidoreductase, using light energy to abstract electrons from H(2)O, generating a proton gradient subsequently used for ATP formation. The chain is Photosystem II reaction center protein Y from Cyanophora paradoxa.